Here is a 336-residue protein sequence, read N- to C-terminus: uncharacterized protein (336 aa).

Positions 297–316 (KKDLQKSEEEEHPNDDHVYM) are enriched in basic and acidic residues. The disordered stretch occupies residues 297-336 (KKDLQKSEEEEHPNDDHVYMTEEDDMEKIERGIESLGNGH).

This is an uncharacterized protein from Invertebrate iridescent virus 6 (IIV-6).